Reading from the N-terminus, the 149-residue chain is Evolved beta-galactosidase subunit beta (149 aa).

As to quaternary structure, heterooctamer of 4 alpha and 4 beta subunits.

In terms of biological role, required for full activity of the EbgA enzyme. Exact function not known. The sequence is that of Evolved beta-galactosidase subunit beta (ebgC) from Escherichia coli O6:H1 (strain CFT073 / ATCC 700928 / UPEC).